A 102-amino-acid chain; its full sequence is Large ribosomal subunit protein bL21 (102 aa).

Belongs to the bacterial ribosomal protein bL21 family. Part of the 50S ribosomal subunit. Contacts protein L20.

Its function is as follows. This protein binds to 23S rRNA in the presence of protein L20. The polypeptide is Large ribosomal subunit protein bL21 (Phytoplasma mali (strain AT)).